The sequence spans 116 residues: Transcription elongation factor SPT4 homolog 1 (116 aa).

The segment at 19–39 adopts a C4-type zinc-finger fold; it reads CLRCRLVKTYDQFRDSGCENC.

The protein belongs to the SPT4 family.

The protein resides in the nucleus. Its function is as follows. May regulate transcription elongation by RNA polymerase II. May enhance transcriptional pausing at sites proximal to the promoter, which may in turn facilitate the assembly of an elongation competent RNA polymerase II complex. The polypeptide is Transcription elongation factor SPT4 homolog 1 (Arabidopsis thaliana (Mouse-ear cress)).